The chain runs to 156 residues: C-type lectin lectoxin-Phi2 (156 aa).

The N-terminal stretch at 1 to 23 (MGRFIFVSLGLLVLAFSLSGIGA) is a signal peptide. 3 disulfides stabilise this stretch: Cys-27–Cys-38, Cys-55–Cys-154, and Cys-129–Cys-146. A C-type lectin domain is found at 34 to 155 (HNVSCYKLIN…CNRRHRFLCK (122 aa)). N-linked (GlcNAc...) asparagine glycosylation is found at Asn-35 and Asn-109. The Mannose-binding signature appears at 119–121 (EPN). 3 residues coordinate Ca(2+): Glu-127, Asn-142, and Asp-143.

The protein belongs to the true venom lectin family. Expressed by the venom gland.

The protein localises to the secreted. In terms of biological role, mannose-binding lectin which recognizes specific carbohydrate structures and agglutinates a variety of animal cells by binding to cell-surface glycoproteins and glycolipids. May be a calcium-dependent lectin. The protein is C-type lectin lectoxin-Phi2 of Philodryas olfersii (Green snake).